The chain runs to 2294 residues: Protein Ycf2 (2294 aa).

1635–1642 (GSIGTGRS) provides a ligand contact to ATP.

It belongs to the Ycf2 family.

It is found in the plastid. The protein resides in the chloroplast stroma. Probable ATPase of unknown function. Its presence in a non-photosynthetic plant (Epifagus virginiana) and experiments in tobacco indicate that it has an essential function which is probably not related to photosynthesis. This is Protein Ycf2 from Ranunculus macranthus (Large buttercup).